A 260-amino-acid polypeptide reads, in one-letter code: Hydroxyethylthiazole kinase 1 (260 aa).

Met39 provides a ligand contact to substrate. 2 residues coordinate ATP: Arg115 and Thr160. Substrate is bound at residue Gly187.

This sequence belongs to the Thz kinase family. It depends on Mg(2+) as a cofactor.

It catalyses the reaction 5-(2-hydroxyethyl)-4-methylthiazole + ATP = 4-methyl-5-(2-phosphooxyethyl)-thiazole + ADP + H(+). It functions in the pathway cofactor biosynthesis; thiamine diphosphate biosynthesis; 4-methyl-5-(2-phosphoethyl)-thiazole from 5-(2-hydroxyethyl)-4-methylthiazole: step 1/1. Functionally, catalyzes the phosphorylation of the hydroxyl group of 4-methyl-5-beta-hydroxyethylthiazole (THZ). The protein is Hydroxyethylthiazole kinase 1 of Streptococcus pneumoniae (strain Hungary19A-6).